Here is a 582-residue protein sequence, read N- to C-terminus: Histone deacetylase 9-B (582 aa).

The interval 146–195 (SNEVKQKLQEFLLSKSTKDITLNGIPQKITQSSKLWYTASHHTSLEQSSP) is interaction with mef2. Positions 189–205 (SLEQSSPPLGGASSSCK) are enriched in polar residues. 4 disordered regions span residues 189–254 (SLEQ…KEGN), 270–314 (TASS…QSRL), 409–447 (LSSGQSPVHPPSPLAMMENSPSSTRPKLPRHRPLNRTQS), and 496–567 (VHLQ…NQSS). Composition is skewed to basic and acidic residues over residues 213–224 (DYRDDFPLRKTV) and 238–253 (KVAERRSSPLLRRKEG). Positions 270-289 (TASSSAPGSGPSSPNGACSA) are enriched in low complexity. The span at 295-314 (GPSSLPVTTRTERWPSQSRL) shows a compositional bias: polar residues.

It belongs to the histone deacetylase family. HD type 2 subfamily. In terms of assembly, homodimer. Interacts with mef2.

It localises to the nucleus. The catalysed reaction is N(6)-acetyl-L-lysyl-[histone] + H2O = L-lysyl-[histone] + acetate. Its function is as follows. Devoided of intrinsic deacetylase activity, promotes the deacetylation of lysine residues on the N-terminal part of the core histones (H2A, H2B, H3 and H4) by recruiting other histone deacetylases. Histone deacetylation gives a tag for epigenetic repression and plays an important role in transcriptional regulation, cell cycle progression and developmental events. Represses MEF2-dependent transcription. The polypeptide is Histone deacetylase 9-B (hdac9b) (Danio rerio (Zebrafish)).